The chain runs to 105 residues: Small ribosomal subunit protein uS10 (105 aa).

Belongs to the universal ribosomal protein uS10 family. In terms of assembly, part of the 30S ribosomal subunit.

Its function is as follows. Involved in the binding of tRNA to the ribosomes. The chain is Small ribosomal subunit protein uS10 from Rickettsia conorii (strain ATCC VR-613 / Malish 7).